The chain runs to 309 residues: MILDNFFKNLIYEPVSVLGLLVFYFLLINLPISLGAVFKKKSSSAVRLITILVNLLITLQLLFRWSISGHFPISNLYESLYFLTWGITLGQLLVEREYQAPIIPSIAIPIELLTVAFACFVLPEDLKLSSNLVPALRSSWLVMHVSVVMLSYAALIIGSLLSMSVLFINKNKPLQIRSSSTGIGGFKLSNSYPVNDLVEPIEFSHSEELDTLSYRSILVGFVLLTLGLISGAVWANEAWGTWWSWDPKETWAFISWLFYAAYLHMRISKGWQGRKPALLASTGFLVVLVCYLGVNFLGIGLHSYGWIFG.

Transmembrane regions (helical) follow at residues 18–38, 48–68, 73–93, 102–122, 148–168, 216–236, 250–267, and 279–299; these read LGLLVFYFLLINLPISLGAVF, LITILVNLLITLQLLFRWSIS, ISNLYESLYFLTWGITLGQLL, IIPSIAIPIELLTVAFACFVL, VMLSYAALIIGSLLSMSVLFI, SILVGFVLLTLGLISGAVWAN, TWAFISWLFYAAYLHMRI, and LASTGFLVVLVCYLGVNFLGI.

The protein belongs to the CcmF/CycK/Ccl1/NrfE/CcsA family. In terms of assembly, may interact with ccs1.

It is found in the cellular thylakoid membrane. Functionally, required during biogenesis of c-type cytochromes (cytochrome c6 and cytochrome f) at the step of heme attachment. This is Cytochrome c biogenesis protein CcsA from Prochlorococcus marinus (strain AS9601).